Consider the following 329-residue polypeptide: T-lymphocyte activation antigen CD86 (329 aa).

The N-terminal stretch at Met1 to Ala23 is a signal peptide. Residues Ala24 to Pro247 lie on the Extracellular side of the membrane. N-linked (GlcNAc...) asparagine glycans are attached at residues Asn33, Asn47, Asn135, Asn146, Asn154, Asn177, Asn192, and Asn213. One can recognise an Ig-like V-type domain in the interval Asn33–Ser131. An intrachain disulfide couples Cys40 to Cys110. One can recognise an Ig-like C2-type domain in the interval Asn150–Thr225. A disulfide bond links Cys157 and Cys218. Residues Trp248 to Trp268 traverse the membrane as a helical segment. At Lys269–Phe329 the chain is on the cytoplasmic side. The tract at residues Arg277–Phe329 is disordered. The segment covering Met287–Arg312 has biased composition (basic and acidic residues).

Homodimer. Interacts with MARCH8. Interacts (via cytoplasmic domain) with PHB1 and PHB2; the interactions increases after priming with CD40. Interacts with CD28. As to quaternary structure, (Microbial infection) Interacts with adenovirus subgroup b fiber protein. In terms of assembly, (Microbial infection) Interacts with Orthopoxvirus OPG038/M2 protein, inhibiting the interaction with CTLA4 and CD28. In terms of processing, polyubiquitinated; which is promoted by MARCH8 and results in endocytosis and lysosomal degradation. Expressed by activated B-lymphocytes and monocytes.

The protein resides in the cell membrane. Functionally, receptor involved in the costimulatory signal essential for T-lymphocyte proliferation and interleukin-2 production, by binding CD28 or CTLA-4. May play a critical role in the early events of T-cell activation and costimulation of naive T-cells, such as deciding between immunity and anergy that is made by T-cells within 24 hours after activation. Also involved in the regulation of B cells function, plays a role in regulating the level of IgG(1) produced. Upon CD40 engagement, activates NF-kappa-B signaling pathway via phospholipase C and protein kinase C activation. In terms of biological role, interferes with the formation of CD86 clusters, and thus acts as a negative regulator of T-cell activation. Its function is as follows. (Microbial infection) Acts as a receptor for adenovirus subgroup B. The chain is T-lymphocyte activation antigen CD86 (CD86) from Homo sapiens (Human).